The chain runs to 117 residues: MISKPDKNKLRVKRHKRVRGKISGTAARPRLNVFRSNANIYAQLIDDVAGVTLASASSHDAEVTGSKTEQAVKVGELIASRGKAAKIEDVIFDRGGYVYHGRVQALADSARENGLKF.

This sequence belongs to the universal ribosomal protein uL18 family. As to quaternary structure, part of the 50S ribosomal subunit; part of the 5S rRNA/L5/L18/L25 subcomplex. Contacts the 5S and 23S rRNAs.

In terms of biological role, this is one of the proteins that bind and probably mediate the attachment of the 5S RNA into the large ribosomal subunit, where it forms part of the central protuberance. The protein is Large ribosomal subunit protein uL18 of Leuconostoc mesenteroides subsp. mesenteroides (strain ATCC 8293 / DSM 20343 / BCRC 11652 / CCM 1803 / JCM 6124 / NCDO 523 / NBRC 100496 / NCIMB 8023 / NCTC 12954 / NRRL B-1118 / 37Y).